A 692-amino-acid chain; its full sequence is Elongation factor G (692 aa).

Positions 8–282 (DKTRNIGIMA…AVLDYLPAPT (275 aa)) constitute a tr-type G domain. Residues 17-24 (AHIDAGKT), 81-85 (DTPGH), and 135-138 (NKMD) each bind GTP.

This sequence belongs to the TRAFAC class translation factor GTPase superfamily. Classic translation factor GTPase family. EF-G/EF-2 subfamily.

It localises to the cytoplasm. In terms of biological role, catalyzes the GTP-dependent ribosomal translocation step during translation elongation. During this step, the ribosome changes from the pre-translocational (PRE) to the post-translocational (POST) state as the newly formed A-site-bound peptidyl-tRNA and P-site-bound deacylated tRNA move to the P and E sites, respectively. Catalyzes the coordinated movement of the two tRNA molecules, the mRNA and conformational changes in the ribosome. This chain is Elongation factor G, found in Bacillus pumilus (strain SAFR-032).